Reading from the N-terminus, the 95-residue chain is uncharacterized protein (95 aa).

A coiled-coil region spans residues 60–89 (VKNMINRIVEELDKRIDEIKEGLNELEKSG).

This is an uncharacterized protein from Sulfolobus islandicus filamentous virus (isolate Iceland/Hveragerdi) (SIFV).